The primary structure comprises 949 residues: Glycine dehydrogenase (decarboxylating) (949 aa).

Lys-704 is subject to N6-(pyridoxal phosphate)lysine.

It belongs to the GcvP family. As to quaternary structure, the glycine cleavage system is composed of four proteins: P, T, L and H. The cofactor is pyridoxal 5'-phosphate.

It catalyses the reaction N(6)-[(R)-lipoyl]-L-lysyl-[glycine-cleavage complex H protein] + glycine + H(+) = N(6)-[(R)-S(8)-aminomethyldihydrolipoyl]-L-lysyl-[glycine-cleavage complex H protein] + CO2. Functionally, the glycine cleavage system catalyzes the degradation of glycine. The P protein binds the alpha-amino group of glycine through its pyridoxal phosphate cofactor; CO(2) is released and the remaining methylamine moiety is then transferred to the lipoamide cofactor of the H protein. The polypeptide is Glycine dehydrogenase (decarboxylating) (Bacteroides fragilis (strain YCH46)).